An 85-amino-acid chain; its full sequence is Small ribosomal subunit protein bS20 (85 aa).

It belongs to the bacterial ribosomal protein bS20 family.

Functionally, binds directly to 16S ribosomal RNA. In Borreliella afzelii (strain PKo) (Borrelia afzelii), this protein is Small ribosomal subunit protein bS20.